The sequence spans 493 residues: Signal recognition particle subunit SRP54 3 (493 aa).

Residues M1–L294 form a G-domain region. Residues G107–T114, D189–R193, and T247–D250 each bind GTP. An M-domain region spans residues G295–A493.

It belongs to the GTP-binding SRP family. SRP54 subfamily. As to quaternary structure, component of a signal recognition particle (SRP) complex that consists of a 7SL RNA molecule of 300 nucleotides and six protein subunits: SRP72, SRP68, SRP54, SRP19, SRP14 and SRP9.

It is found in the cytoplasm. Its subcellular location is the endoplasmic reticulum. It catalyses the reaction GTP + H2O = GDP + phosphate + H(+). In terms of biological role, component of the signal recognition particle (SRP) complex, a ribonucleoprotein complex that mediates the cotranslational targeting of secretory and membrane proteins to the endoplasmic reticulum (ER). As part of the SRP complex, associates with the SRP receptor (SR) component SRPRA to target secretory proteins to the endoplasmic reticulum membrane. Binds to the signal sequence of presecretory proteins when they emerge from the ribosomes. Displays basal GTPase activity, and stimulates reciprocal GTPase activation of the SR subunit SRPRA. Forms a guanosine 5'-triphosphate (GTP)-dependent complex with the SR subunit SRPRA. SR compaction and GTPase mediated rearrangement of SR drive SRP-mediated cotranslational protein translocation into the ER. Requires the presence of SRP9/SRP14 and/or SRP19 to stably interact with RNA. The protein is Signal recognition particle subunit SRP54 3 (SRP54-3) of Hordeum vulgare (Barley).